Here is a 513-residue protein sequence, read N- to C-terminus: GMP synthase [glutamine-hydrolyzing] (513 aa).

Positions 7-198 constitute a Glutamine amidotransferase type-1 domain; the sequence is LIVVVDFGGQ…LFNIAGCRGD (192 aa). The active-site Nucleophile is Cys-84. Residues His-172 and Glu-174 contribute to the active site. Positions 199 to 388 constitute a GMPS ATP-PPase domain; that stretch reads WTTESFITRQ…LGVPEEIVGR (190 aa). Residue 226 to 232 coordinates ATP; that stretch reads SGGVDSS.

Homodimer.

It carries out the reaction XMP + L-glutamine + ATP + H2O = GMP + L-glutamate + AMP + diphosphate + 2 H(+). The protein operates within purine metabolism; GMP biosynthesis; GMP from XMP (L-Gln route): step 1/1. Its function is as follows. Catalyzes the synthesis of GMP from XMP. The polypeptide is GMP synthase [glutamine-hydrolyzing] (Symbiobacterium thermophilum (strain DSM 24528 / JCM 14929 / IAM 14863 / T)).